A 470-amino-acid chain; its full sequence is ATP synthase subunit beta (470 aa).

157 to 164 is a binding site for ATP; that stretch reads GGAGVGKT.

The protein belongs to the ATPase alpha/beta chains family. As to quaternary structure, F-type ATPases have 2 components, CF(1) - the catalytic core - and CF(0) - the membrane proton channel. CF(1) has five subunits: alpha(3), beta(3), gamma(1), delta(1), epsilon(1). CF(0) has three main subunits: a(1), b(2) and c(9-12). The alpha and beta chains form an alternating ring which encloses part of the gamma chain. CF(1) is attached to CF(0) by a central stalk formed by the gamma and epsilon chains, while a peripheral stalk is formed by the delta and b chains.

The protein localises to the cell inner membrane. The catalysed reaction is ATP + H2O + 4 H(+)(in) = ADP + phosphate + 5 H(+)(out). Functionally, produces ATP from ADP in the presence of a proton gradient across the membrane. The catalytic sites are hosted primarily by the beta subunits. The polypeptide is ATP synthase subunit beta (Geobacter sp. (strain M21)).